The following is a 450-amino-acid chain: E3 ubiquitin-protein ligase XB3 (450 aa).

ANK repeat units follow at residues 11–40, 46–75, 79–108, 113–142, 158–187, and 195–225; these read GDEH…SLAR, DRLS…PPDA, HKQT…NILM, HART…TTPV, HGAT…IVSA, and PGST…RLQR. Residues 291–312 form a disordered region; that stretch reads ILNGTKYSLPSPSPGDDSADDD. The RING-type zinc-finger motif lies at 323 to 372; sequence CCICFDQACTIEVQDCGHQMCAPCTLALCCHNKPNPTTLTPPSPACPFCR. Residues 385–450 are disordered; sequence SACDPDKPSS…SNLDKPEHDL (66 aa).

In terms of assembly, interacts (via ankyrin repeats) with XA21. Post-translationally, phosphorylated by XA21.

It carries out the reaction S-ubiquitinyl-[E2 ubiquitin-conjugating enzyme]-L-cysteine + [acceptor protein]-L-lysine = [E2 ubiquitin-conjugating enzyme]-L-cysteine + N(6)-ubiquitinyl-[acceptor protein]-L-lysine.. Its pathway is protein modification; protein ubiquitination. Its function is as follows. E3 ubiquitin-protein ligase required for full accumulation of the LRR receptor kinase XA21 and XA21-mediated disease resistance. Binding to XA21 may stabilize the receptor kinase and maintain its protein level. Autoubiquitinated in vitro. In Oryza sativa subsp. japonica (Rice), this protein is E3 ubiquitin-protein ligase XB3 (XB3).